Reading from the N-terminus, the 221-residue chain is Putative adhesin P1-like protein MPN_131 (221 aa).

Residues 13–36 (RYGNNHRGSNSSTSGVTTQGQSQN) show a composition bias toward low complexity. Disordered regions lie at residues 13 to 51 (RYGN…NVGV) and 90 to 183 (GWRN…TPSG). Positions 37-48 (ASSNEPAPTFSN) are enriched in polar residues. Residues 130–139 (LKQDKADKSG) show a composition bias toward basic and acidic residues. Composition is skewed to polar residues over residues 149–160 (SGDNLTNYTNLP) and 174–183 (HSPTRTTPSG).

Belongs to the adhesin P1 family.

This Mycoplasma pneumoniae (strain ATCC 29342 / M129 / Subtype 1) (Mycoplasmoides pneumoniae) protein is Putative adhesin P1-like protein MPN_131.